The sequence spans 258 residues: Tryptophan synthase alpha chain (258 aa).

Active-site proton acceptor residues include Glu-47 and Asp-58.

This sequence belongs to the TrpA family. Tetramer of two alpha and two beta chains.

It catalyses the reaction (1S,2R)-1-C-(indol-3-yl)glycerol 3-phosphate + L-serine = D-glyceraldehyde 3-phosphate + L-tryptophan + H2O. The protein operates within amino-acid biosynthesis; L-tryptophan biosynthesis; L-tryptophan from chorismate: step 5/5. Functionally, the alpha subunit is responsible for the aldol cleavage of indoleglycerol phosphate to indole and glyceraldehyde 3-phosphate. The protein is Tryptophan synthase alpha chain of Bacillus cereus (strain ZK / E33L).